Here is a 468-residue protein sequence, read N- to C-terminus: 6-phospho-beta-galactosidase (468 aa).

5 residues coordinate D-galactose 6-phosphate: Q19, H116, N159, E160, and N297. E160 serves as the catalytic Proton donor. The Nucleophile role is filled by E375. The D-galactose 6-phosphate site is built by S428, W429, K435, and Y437.

This sequence belongs to the glycosyl hydrolase 1 family.

It carries out the reaction a 6-phospho-beta-D-galactoside + H2O = D-galactose 6-phosphate + an alcohol. The protein operates within carbohydrate metabolism; lactose degradation; D-galactose 6-phosphate and beta-D-glucose from lactose 6-phosphate: step 1/1. In Streptococcus pyogenes serotype M12 (strain MGAS2096), this protein is 6-phospho-beta-galactosidase.